A 466-amino-acid chain; its full sequence is Uronate isomerase (466 aa).

It belongs to the metallo-dependent hydrolases superfamily. Uronate isomerase family.

The enzyme catalyses D-glucuronate = D-fructuronate. It catalyses the reaction aldehydo-D-galacturonate = keto-D-tagaturonate. It functions in the pathway carbohydrate metabolism; pentose and glucuronate interconversion. This Streptococcus agalactiae serotype III (strain NEM316) protein is Uronate isomerase.